The chain runs to 56 residues: Large ribosomal subunit protein bL32c (56 aa).

This sequence belongs to the bacterial ribosomal protein bL32 family.

It is found in the plastid. It localises to the chloroplast. The polypeptide is Large ribosomal subunit protein bL32c (Platanus occidentalis (Sycamore)).